Here is an 860-residue protein sequence, read N- to C-terminus: Beta-glucosidase 1 (860 aa).

The N-terminal stretch at 1 to 19 is a signal peptide; that stretch reads MKLSWLEAAALTAASVVSA. N-linked (GlcNAc...) asparagine glycosylation is found at asparagine 61, asparagine 211, and asparagine 252. The active site involves aspartate 280. Asparagine 315, asparagine 322, asparagine 354, asparagine 387, asparagine 442, asparagine 523, asparagine 542, asparagine 564, asparagine 658, asparagine 668, asparagine 690, and asparagine 712 each carry an N-linked (GlcNAc...) asparagine glycan.

It belongs to the glycosyl hydrolase 3 family.

It catalyses the reaction Hydrolysis of terminal, non-reducing beta-D-glucosyl residues with release of beta-D-glucose.. The protein operates within glycan metabolism; cellulose degradation. The sequence is that of Beta-glucosidase 1 from Aspergillus aculeatus.